The primary structure comprises 130 residues: Fumarate reductase subunit C (130 aa).

The next 3 helical transmembrane spans lie at 30 to 50 (EGTS…VFSL), 60 to 80 (FVSF…LFAA), and 110 to 130 (IKAL…VALL).

The protein belongs to the FrdC family. In terms of assembly, part of an enzyme complex containing four subunits: a flavoprotein (FrdA), an iron-sulfur protein (FrdB), and two hydrophobic anchor proteins (FrdC and FrdD).

The protein resides in the cell inner membrane. Its function is as follows. Two distinct, membrane-bound, FAD-containing enzymes are responsible for the catalysis of fumarate and succinate interconversion; fumarate reductase is used in anaerobic growth, and succinate dehydrogenase is used in aerobic growth. Anchors the catalytic components of the fumarate reductase complex to the cell inner membrane, binds quinones. The chain is Fumarate reductase subunit C from Yersinia pestis bv. Antiqua (strain Angola).